A 38-amino-acid polypeptide reads, in one-letter code: Kappa-theraphotoxin-Hm2a (38 aa).

Cystine bridges form between Cys-2–Cys-16, Cys-9–Cys-21, and Cys-15–Cys-32. A Phenylalanine amide modification is found at Phe-38.

The protein belongs to the neurotoxin 10 (Hwtx-1) family. 13 (Hntx-13) subfamily. As to expression, expressed by the venom gland.

It is found in the secreted. Its function is as follows. Inhibitor of voltage-gated potassium channels. It specifically inhibits Kv2.1/KCNB1 channels. The sequence is that of Kappa-theraphotoxin-Hm2a from Heteroscodra maculata (Togo starburst tarantula).